A 706-amino-acid polypeptide reads, in one-letter code: Fatty acid oxidation complex subunit alpha (706 aa).

Positions 1–188 are enoyl-CoA hydratase; the sequence is MEKTFNLTRR…KMGLVNDVVP (188 aa). The 3-hydroxyacyl-CoA dehydrogenase stretch occupies residues 308-706; it reads RKVKKAVILG…TMAQENAHFF (399 aa).

The protein in the N-terminal section; belongs to the enoyl-CoA hydratase/isomerase family. In the central section; belongs to the 3-hydroxyacyl-CoA dehydrogenase family. As to quaternary structure, heterotetramer of two alpha chains (FadJ) and two beta chains (FadI).

The protein resides in the cytoplasm. It catalyses the reaction a (3S)-3-hydroxyacyl-CoA = a (2E)-enoyl-CoA + H2O. It carries out the reaction a 4-saturated-(3S)-3-hydroxyacyl-CoA = a (3E)-enoyl-CoA + H2O. The enzyme catalyses a (3S)-3-hydroxyacyl-CoA + NAD(+) = a 3-oxoacyl-CoA + NADH + H(+). The catalysed reaction is (3S)-3-hydroxybutanoyl-CoA = (3R)-3-hydroxybutanoyl-CoA. It participates in lipid metabolism; fatty acid beta-oxidation. Its function is as follows. Catalyzes the formation of a hydroxyacyl-CoA by addition of water on enoyl-CoA. Also exhibits 3-hydroxyacyl-CoA epimerase and 3-hydroxyacyl-CoA dehydrogenase activities. This chain is Fatty acid oxidation complex subunit alpha, found in Shewanella baltica (strain OS155 / ATCC BAA-1091).